A 115-amino-acid polypeptide reads, in one-letter code: Large ribosomal subunit protein uL24 (115 aa).

Belongs to the universal ribosomal protein uL24 family. Part of the 50S ribosomal subunit.

One of two assembly initiator proteins, it binds directly to the 5'-end of the 23S rRNA, where it nucleates assembly of the 50S subunit. In terms of biological role, one of the proteins that surrounds the polypeptide exit tunnel on the outside of the subunit. This is Large ribosomal subunit protein uL24 from Deinococcus geothermalis (strain DSM 11300 / CIP 105573 / AG-3a).